We begin with the raw amino-acid sequence, 294 residues long: Acetylglutamate kinase (294 aa).

Substrate-binding positions include 63–64 (GG), Arg85, and Asn188.

It belongs to the acetylglutamate kinase family. ArgB subfamily.

It localises to the cytoplasm. The enzyme catalyses N-acetyl-L-glutamate + ATP = N-acetyl-L-glutamyl 5-phosphate + ADP. The protein operates within amino-acid biosynthesis; L-arginine biosynthesis; N(2)-acetyl-L-ornithine from L-glutamate: step 2/4. Its function is as follows. Catalyzes the ATP-dependent phosphorylation of N-acetyl-L-glutamate. The chain is Acetylglutamate kinase from Methanococcus maripaludis (strain DSM 14266 / JCM 13030 / NBRC 101832 / S2 / LL).